Reading from the N-terminus, the 150-residue chain is Ribonuclease HI (150 aa).

One can recognise an RNase H type-1 domain in the interval 1-141; the sequence is MKSINAYTDG…VDVLARGQAM (141 aa). Residues Asp9, Glu47, Asp69, and Asp133 each contribute to the Mg(2+) site.

Belongs to the RNase H family. As to quaternary structure, monomer. Mg(2+) is required as a cofactor.

It localises to the cytoplasm. The enzyme catalyses Endonucleolytic cleavage to 5'-phosphomonoester.. In terms of biological role, endonuclease that specifically degrades the RNA of RNA-DNA hybrids. The polypeptide is Ribonuclease HI (Xylella fastidiosa (strain 9a5c)).